The primary structure comprises 250 residues: Bis(5'-nucleosyl)-tetraphosphatase PrpE [asymmetrical] (250 aa).

This sequence belongs to the PrpE family. It depends on Ni(2+) as a cofactor.

It carries out the reaction P(1),P(4)-bis(5'-guanosyl) tetraphosphate + H2O = GMP + GTP + 2 H(+). In terms of biological role, asymmetrically hydrolyzes Ap4p to yield AMP and ATP. The protein is Bis(5'-nucleosyl)-tetraphosphatase PrpE [asymmetrical] of Oceanobacillus iheyensis (strain DSM 14371 / CIP 107618 / JCM 11309 / KCTC 3954 / HTE831).